A 330-amino-acid chain; its full sequence is ATP-dependent Clp protease proteolytic subunit-related protein 3, chloroplastic (330 aa).

The N-terminal 43 residues, 1-43 (MASCLQASMNSLLPRSSSFSPHPPLSSNSSGRRNLKTFRYAFR), are a transit peptide targeting the chloroplast. Residues 7-32 (ASMNSLLPRSSSFSPHPPLSSNSSGR) form a disordered region. Low complexity predominate over residues 8 to 30 (SMNSLLPRSSSFSPHPPLSSNSS).

Belongs to the peptidase S14 family. In terms of assembly, component of the chloroplastic Clp protease core complex which consist of at least 16 proteins: CLPP4 (3 copies), CLPP5 (3 copies), CLPR4 (2 copies), ClpP1 (1 copy), CLPP6 (1 copy), CLPR2 (1 copy), CLPT1 (1 copy), CLPT2 (1 copy) and 3 copies of CLPP3 and/or CLPR1 and/or CLPR3. The core complex is organized in two heptameric rings, one containing CLPP3,4,5,6 in a 1:2:3:1 ratio and the other CLPP1 and CLPR1,2,3,4 in a 3:1:1:1:1 ratio.

The protein localises to the plastid. It localises to the chloroplast. The protein is ATP-dependent Clp protease proteolytic subunit-related protein 3, chloroplastic of Arabidopsis thaliana (Mouse-ear cress).